Here is a 230-residue protein sequence, read N- to C-terminus: Flagellar L-ring protein (230 aa).

The N-terminal stretch at 1 to 15 (MSRLPSLSSLCLAIA) is a signal peptide. The N-palmitoyl cysteine moiety is linked to residue C16. C16 is lipidated: S-diacylglycerol cysteine.

The protein belongs to the FlgH family. In terms of assembly, the basal body constitutes a major portion of the flagellar organelle and consists of four rings (L,P,S, and M) mounted on a central rod.

It is found in the cell outer membrane. The protein resides in the bacterial flagellum basal body. Assembles around the rod to form the L-ring and probably protects the motor/basal body from shearing forces during rotation. This Xanthomonas campestris pv. campestris (strain 8004) protein is Flagellar L-ring protein.